Consider the following 301-residue polypeptide: Peptidyl-prolyl cis-trans isomerase E (301 aa).

The region spanning 5–83 is the RRM domain; that stretch reads KRVLYVGGLA…GRTIRVNLAK (79 aa). Residues Ser91, Ser97, and Ser119 each carry the phosphoserine modification. A disordered region spans residues 107–140; sequence GKTLEENKEEEGSEPPKAETQEGEPAAKKARSNP. The PPIase cyclophilin-type domain maps to 143 to 299; sequence YMDIKIGNKP…QKVIIADCGE (157 aa).

The protein belongs to the cyclophilin-type PPIase family. PPIase E subfamily. As to quaternary structure, identified in the spliceosome C complex. Component of the XAB2 complex, a multimeric protein complex composed of XAB2, PRPF19, AQR, ZNF830, ISY1, and PPIE. Identified in a pentameric intron-binding (IB) complex composed of AQR, XAB2, ISY1, ZNF830 and PPIE that is incorporated into the spliceosome as a preassembled complex. The IB complex does not contain PRPF19. Interacts (via RNA-binding domain) with KMT2A (via the third PHD-type zinc-finger).

Its subcellular location is the nucleus. The catalysed reaction is [protein]-peptidylproline (omega=180) = [protein]-peptidylproline (omega=0). Functionally, involved in pre-mRNA splicing as component of the spliceosome. Combines RNA-binding and PPIase activities. Binds mRNA and has a preference for single-stranded RNA molecules with poly-A and poly-U stretches, suggesting it binds to the poly(A)-region in the 3'-UTR of mRNA molecules. Catalyzes the cis-trans isomerization of proline imidic peptide bonds in proteins. Inhibits KMT2A activity; this requires proline isomerase activity. This is Peptidyl-prolyl cis-trans isomerase E (PPIE) from Pongo abelii (Sumatran orangutan).